Reading from the N-terminus, the 110-residue chain is MSDTLTRLAQVLEERKDAAADSSYVASLYHKGLNKILEKVGEESVETIIAAKDAAISGDCSDVIYETADLWFHTLVMLAQLGQHPQAVLDELDRRFGLSGHAEKASRPSA.

This sequence belongs to the PRA-PH family.

The protein localises to the cytoplasm. It catalyses the reaction 1-(5-phospho-beta-D-ribosyl)-ATP + H2O = 1-(5-phospho-beta-D-ribosyl)-5'-AMP + diphosphate + H(+). It functions in the pathway amino-acid biosynthesis; L-histidine biosynthesis; L-histidine from 5-phospho-alpha-D-ribose 1-diphosphate: step 2/9. This chain is Phosphoribosyl-ATP pyrophosphatase, found in Pseudomonas fluorescens (strain ATCC BAA-477 / NRRL B-23932 / Pf-5).